Reading from the N-terminus, the 235-residue chain is Uridylate kinase (235 aa).

10-13 (KLSG) is an ATP binding site. UMP is bound at residue Gly52. The ATP site is built by Gly53 and Arg57. Residues Asp72 and 133-140 (TSNPYFST) each bind UMP. ATP is bound by residues Thr160, Tyr166, and Asp169.

Belongs to the UMP kinase family. Homohexamer.

It is found in the cytoplasm. It catalyses the reaction UMP + ATP = UDP + ADP. The protein operates within pyrimidine metabolism; CTP biosynthesis via de novo pathway; UDP from UMP (UMPK route): step 1/1. Inhibited by UTP. In terms of biological role, catalyzes the reversible phosphorylation of UMP to UDP. This is Uridylate kinase from Solibacter usitatus (strain Ellin6076).